The sequence spans 91 residues: Cell division topological specificity factor (91 aa).

Belongs to the MinE family.

Prevents the cell division inhibition by proteins MinC and MinD at internal division sites while permitting inhibition at polar sites. This ensures cell division at the proper site by restricting the formation of a division septum at the midpoint of the long axis of the cell. This Lachnospira eligens (strain ATCC 27750 / DSM 3376 / VPI C15-48 / C15-B4) (Eubacterium eligens) protein is Cell division topological specificity factor.